The sequence spans 652 residues: Zinc finger protein 432 (652 aa).

The KRAB domain maps to 8 to 79; sequence LTLEDVTVEF…EDERHSRICP (72 aa). Y41 is modified (3'-nitrotyrosine). 2 positions are modified to ADP-ribosylserine: S139 and S164. 16 C2H2-type zinc fingers span residues 205–227, 233–255, 261–283, 289–311, 317–339, 345–367, 373–395, 401–423, 429–451, 457–479, 485–507, 513–535, 541–563, 567–591, 597–619, and 625–647; these read HVCS…ERVH, YGCT…QRIH, FICS…QRTH, YICN…QRNH, YICS…QRTH, YICS…QRNH, YICN…QRTH, YLCS…QRTH, YTCS…QRTH, YRCS…QRTH, FMCS…QQIH, KSCI…KQVH, YGCN…QRTH, and FVCS…QRTH. S246 bears the ADP-ribosylserine mark. Residue S330 is modified to ADP-ribosylserine. Position 414 is an ADP-ribosylserine (S414).

The protein belongs to the krueppel C2H2-type zinc-finger protein family. Interacts with PARP1 and several chromatin remodeling proteins; the interaction with PARP1 reshapes ZNF432 interacting proteins. Interacts with TRIM28; the interaction is independent of PARP1.

The protein localises to the nucleus. In terms of biological role, homologous recombination repressor that functions as a poly(ADP-ribose) (PAR) reader regulating DNA damage response and PARP inhibition. Once recruited to DNA lesions via DNA-, in a PAR-dependent mechanism, stimulates PARP1 activity. Binds preferentially ssDNA and inhibits EXO1-mediated resection, probably through a PAR-independent DNA-binding mechanism. The sequence is that of Zinc finger protein 432 from Homo sapiens (Human).